The sequence spans 256 residues: DNA repair protein RecO (256 aa).

It belongs to the RecO family.

Involved in DNA repair and RecF pathway recombination. This chain is DNA repair protein RecO, found in Thiobacillus denitrificans (strain ATCC 25259 / T1).